A 474-amino-acid chain; its full sequence is PTS system sucrose-specific EIIBC component (474 aa).

Residues 4–87 (SQIAQQVIDK…SKLLGIGDMT (84 aa)) enclose the PTS EIIB type-1 domain. Cys-26 (phosphocysteine intermediate; for EIIB activity) is an active-site residue. One can recognise a PTS EIIC type-1 domain in the interval 107 to 474 (KGLADIFVPI…LGKRAQLKAE (368 aa)). Transmembrane regions (helical) follow at residues 109 to 129 (LADI…LMGI), 158 to 178 (FINT…GFSA), 182 to 202 (FGGN…PALS), 229 to 249 (VGYQ…ATLE), 264 to 284 (ITPL…IGPI), 303 to 323 (LGFV…ITGM), 345 to 365 (FIFP…LGAA), 376 to 396 (IAVP…MFGV), 403 to 423 (PFIS…LFNV), and 444 to 464 (LAMY…LTVI).

It is found in the cell inner membrane. The enzyme catalyses N(pros)-phospho-L-histidyl-[protein](out) + sucrose = sucrose 6(G)-phosphate(in) + L-histidyl-[protein]. In terms of biological role, the phosphoenolpyruvate-dependent sugar phosphotransferase system (sugar PTS), a major carbohydrate active transport system, catalyzes the phosphorylation of incoming sugar substrates concomitantly with their translocation across the cell membrane. This system is involved in sucrose transport. The chain is PTS system sucrose-specific EIIBC component (scrA) from Pasteurella multocida (strain Pm70).